We begin with the raw amino-acid sequence, 506 residues long: RNA2 polyprotein (506 aa).

The protein belongs to the nepoviruses RNA2 polyprotein family. Post-translationally, specific enzymatic cleavages in vivo by the P1 encoded 3C-like protease yield mature proteins.

It is found in the host cell junction. It localises to the host plasmodesma. Its subcellular location is the virion. In terms of biological role, the movement protein is assembled into tubules that allow the transport of virions from cell to cell. This chain is RNA2 polyprotein, found in Beta vulgaris subsp. vulgaris (Beet).